We begin with the raw amino-acid sequence, 245 residues long: Myozenin-3 (245 aa).

Ser31 carries the post-translational modification Phosphoserine. The tract at residues Leu50–Ser67 is binding to ACTN2, PPP3CA and TCAP. Positions Ser67 to Gln108 are binding to FLNC. The disordered stretch occupies residues Asn93–Ala134. The interval Pro180–Arg201 is binding to ACTN2.

It belongs to the myozenin family. In terms of assembly, interacts with ACTN2, LDB3, FLNC, PPP3CA and TCAP. As to expression, expressed specifically in skeletal muscle and is enriched in fast-twitch muscle fibers. Not detected in heart.

The protein resides in the cytoplasm. The protein localises to the myofibril. Its subcellular location is the sarcomere. It localises to the z line. In terms of biological role, myozenins may serve as intracellular binding proteins involved in linking Z line proteins such as alpha-actinin, gamma-filamin, TCAP/telethonin, LDB3/ZASP and localizing calcineurin signaling to the sarcomere. Plays an important role in the modulation of calcineurin signaling. May play a role in myofibrillogenesis. This Mus musculus (Mouse) protein is Myozenin-3.